We begin with the raw amino-acid sequence, 600 residues long: MVSFTLRAIGACLIGLPALITAAPTSHVSNGFHVVEQLNGVPQGWVQEGSPAPSTQMKFKLALVQGKTAEFEQRVMDISNPKHADYGKFMSREELDAFLQPSSQVKDSVFNWLASEGISKRSVKSNTDWLTFTTSIATAEKLFNTRFYTFKNTADGSQIIRTLKYSVAASAAPYVQMVQPTTKFSAPRPELSSVFTSDLEMTSSANVDCNVTITPDCIRELYKMGNTFATKDPRNRLGISGYLEQYARLDDFSTFIDMFVPSLKGTTFDFKSIDGAKNEQNSSLDSVEASLDVDYAIGLSGALSTYYGTAGRGKLIPDLDQPNITENNNEPYIEQLFYLLDLPDSELPAVLSTSYGENEQSVPPTYSSVVCSLFGRLGARGVSVIFSSGDTGVGSACQSNDGKNTTKFNPIFPAACPFVTSVGGTRQINPEVAIHFSSGGFSERFARPWYQELDVRYYLGHELEKGKWDGLYNPHGRGFPDVAAQSYKFATRDHGKTIGVSGTSASAPLFAGVVSILNSIRLAHNKPRMGFLNPWLYTIGRSGFTDIVHGGSDGCTGTDMYSHLPTPYVPGASWNATKGWDPVTGLGTPNFEKLSKLVLI.

An N-terminal signal peptide occupies residues 1-22; sequence MVSFTLRAIGACLIGLPALITA. A propeptide spans 23–202 (removed in mature form); the sequence is APTSHVSNGF…SVFTSDLEMT (180 aa). 2 N-linked (GlcNAc...) asparagine glycosylation sites follow: N210 and N281. Positions 212–600 constitute a Peptidase S53 domain; the sequence is TITPDCIREL…FEKLSKLVLI (389 aa). Residues E288 and D292 each act as charge relay system in the active site. Residues N323 and N404 are each glycosylated (N-linked (GlcNAc...) asparagine). The active-site Charge relay system is S504. Ca(2+)-binding residues include D546, I547, G579, and D581.

It depends on Ca(2+) as a cofactor.

The protein resides in the secreted. It is found in the extracellular space. The catalysed reaction is Release of an N-terminal tripeptide from a polypeptide.. Functionally, secreted tripeptidyl-peptidase which degrades proteins at acidic pHs and is involved in virulence. The chain is Probable tripeptidyl-peptidase SED4 (SED4) from Trichophyton verrucosum (strain HKI 0517).